The sequence spans 247 residues: Synaptogyrin homolog 1 (247 aa).

Positions 21-175 (FFKKPTVLFR…AAFFAWRRYE (155 aa)) constitute an MARVEL domain. A run of 4 helical transmembrane segments spans residues 25–45 (PTVLFRCAALLFGLILWYSVS), 69–89 (CSFATAVGFFAVCGAIVLIVL), 105–125 (AVLADLVVSAIFTAIFLIGFF), and 151–171 (FGILSALLSFLAWGGAAFFAW). The segment at 206 to 247 (DSTGIGHVGAPPPQSSYQSGAAPQTMQQPPSNPYTQSEGYGY) is disordered. The segment covering 220–247 (SSYQSGAAPQTMQQPPSNPYTQSEGYGY) has biased composition (polar residues).

It belongs to the synaptogyrin family. As to expression, expressed in a wide variety of neurons and is expressed weakly in the non-neuronal distal tip cells. A punctate pattern was observed in the ventral and dorsal nerve cords and the nerve ring. Weak expression is seen in neuronal cell bodies and commissures.

Its subcellular location is the membrane. The protein is Synaptogyrin homolog 1 (sng-1) of Caenorhabditis elegans.